Here is a 33-residue protein sequence, read N- to C-terminus: Cytochrome b6-f complex subunit 8 (33 aa).

Residues L2–V22 form a helical membrane-spanning segment.

It belongs to the PetN family. The 4 large subunits of the cytochrome b6-f complex are cytochrome b6, subunit IV (17 kDa polypeptide, PetD), cytochrome f and the Rieske protein, while the 4 small subunits are PetG, PetL, PetM and PetN. The complex functions as a dimer.

Its subcellular location is the cellular thylakoid membrane. Its function is as follows. Component of the cytochrome b6-f complex, which mediates electron transfer between photosystem II (PSII) and photosystem I (PSI), cyclic electron flow around PSI, and state transitions. The chain is Cytochrome b6-f complex subunit 8 from Parasynechococcus marenigrum (strain WH8102).